We begin with the raw amino-acid sequence, 235 residues long: Hydroxyacylglutathione hydrolase (235 aa).

Zn(2+) contacts are provided by His-53, His-55, Asp-57, His-58, His-109, Asp-127, and His-165.

The protein belongs to the metallo-beta-lactamase superfamily. Glyoxalase II family. Monomer. Zn(2+) is required as a cofactor.

The catalysed reaction is an S-(2-hydroxyacyl)glutathione + H2O = a 2-hydroxy carboxylate + glutathione + H(+). It participates in secondary metabolite metabolism; methylglyoxal degradation; (R)-lactate from methylglyoxal: step 2/2. Thiolesterase that catalyzes the hydrolysis of S-D-lactoyl-glutathione to form glutathione and D-lactic acid. In Haemophilus ducreyi (strain 35000HP / ATCC 700724), this protein is Hydroxyacylglutathione hydrolase.